Reading from the N-terminus, the 846-residue chain is Cap-specific mRNA (nucleoside-2'-O-)-methyltransferase 1 (846 aa).

A disordered region spans residues 1–81; it reads MKRKSDSEQQ…LPDTLAEGSS (81 aa). Positions 2–20 match the Bipartite nuclear localization signal motif; the sequence is KRKSDSEQQPSVQCRKKKR. A compositionally biased stretch (polar residues) spans 27 to 45; that stretch reads NLSSTSDDDTQYSNHGTQE. The region spanning 87 to 133 is the G-patch domain; that stretch reads YNSVSQKLMAKMGFREGEGLGKFGQGRKEIVETSKQKGRRGLGMVLK. Substrate-binding positions include 203–207 and arginine 218; that span reads KSAFD. The region spanning 231–450 is the RrmJ-type SAM-dependent 2'-O-MTase domain; the sequence is FFLNRAAMKM…ERYVVCRGLK (220 aa). Asparagine 234 is a binding site for S-adenosyl-L-methionine. The active site involves lysine 239. Residues 277 to 283 and 335 to 336 each bind S-adenosyl-L-methionine; these read CAGPGGF and DV. Aspartate 364 is an active-site residue. 374–376 serves as a coordination point for substrate; it reads NIQ. Lysine 404 functions as the Proton acceptor in the catalytic mechanism. Position 439 (asparagine 439) interacts with substrate. In terms of domain architecture, WW spans 752–786; that stretch reads KTINEPWSMAYSKSQKRKYFYNSKTKNSQFELPVE.

The protein resides in the nucleus. It catalyses the reaction a 5'-end (N(7)-methyl 5'-triphosphoguanosine)-ribonucleoside in mRNA + S-adenosyl-L-methionine = a 5'-end (N(7)-methyl 5'-triphosphoguanosine)-(2'-O-methyl-ribonucleoside) in mRNA + S-adenosyl-L-homocysteine + H(+). S-adenosyl-L-methionine-dependent methyltransferase that mediates mRNA cap1 2'-O-ribose methylation to the 5'-cap structure of mRNAs. Methylates the ribose of the first nucleotide of a m(7)GpppG-capped mRNA and small nuclear RNA (snRNA) to produce m(7)GpppRm (cap1). Displays a preference for cap0 transcripts. Cap1 modification is linked to higher levels of translation. May be involved in the interferon response pathway. In Xenopus laevis (African clawed frog), this protein is Cap-specific mRNA (nucleoside-2'-O-)-methyltransferase 1 (cmtr1).